Here is a 310-residue protein sequence, read N- to C-terminus: Homoserine kinase (310 aa).

91–101 (PIGSGLGSSAC) lines the ATP pocket.

The protein belongs to the GHMP kinase family. Homoserine kinase subfamily.

The protein localises to the cytoplasm. It carries out the reaction L-homoserine + ATP = O-phospho-L-homoserine + ADP + H(+). It functions in the pathway amino-acid biosynthesis; L-threonine biosynthesis; L-threonine from L-aspartate: step 4/5. In terms of biological role, catalyzes the ATP-dependent phosphorylation of L-homoserine to L-homoserine phosphate. The sequence is that of Homoserine kinase from Sodalis glossinidius (strain morsitans).